The following is a 43-amino-acid chain: Defensin (43 aa).

Intrachain disulfides connect C3–C34, C20–C39, and C24–C41.

It is found in the secreted. Antibacterial peptide active against Gram-positive and Gram-negative bacteria. The chain is Defensin from Palomena prasina (Green shield bug).